Reading from the N-terminus, the 132-residue chain is MTMTDPVADMLTRLRNANSAYHDSVSMPYSKLKARVADILKAEGFIAGWKEEDAEVGKKLTLDLKFGPNRERSIAGVRRISKPGLRVYAKSTNLPHVLGGLGIAILSTSSGLLTDKQAGKKGVGGEVLAYVW.

Belongs to the universal ribosomal protein uS8 family. As to quaternary structure, part of the 30S ribosomal subunit. Contacts proteins S5 and S12.

In terms of biological role, one of the primary rRNA binding proteins, it binds directly to 16S rRNA central domain where it helps coordinate assembly of the platform of the 30S subunit. The protein is Small ribosomal subunit protein uS8 of Pseudarthrobacter chlorophenolicus (strain ATCC 700700 / DSM 12829 / CIP 107037 / JCM 12360 / KCTC 9906 / NCIMB 13794 / A6) (Arthrobacter chlorophenolicus).